The chain runs to 427 residues: Serine--tRNA ligase (427 aa).

233–235 (TAE) is an L-serine binding site. 264-266 (RSE) lines the ATP pocket. An L-serine-binding site is contributed by Glu-287. 351 to 354 (EISS) lines the ATP pocket. Ser-386 contacts L-serine.

Belongs to the class-II aminoacyl-tRNA synthetase family. Type-1 seryl-tRNA synthetase subfamily. Homodimer. The tRNA molecule binds across the dimer.

The protein resides in the cytoplasm. The catalysed reaction is tRNA(Ser) + L-serine + ATP = L-seryl-tRNA(Ser) + AMP + diphosphate + H(+). It catalyses the reaction tRNA(Sec) + L-serine + ATP = L-seryl-tRNA(Sec) + AMP + diphosphate + H(+). The protein operates within aminoacyl-tRNA biosynthesis; selenocysteinyl-tRNA(Sec) biosynthesis; L-seryl-tRNA(Sec) from L-serine and tRNA(Sec): step 1/1. In terms of biological role, catalyzes the attachment of serine to tRNA(Ser). Is also able to aminoacylate tRNA(Sec) with serine, to form the misacylated tRNA L-seryl-tRNA(Sec), which will be further converted into selenocysteinyl-tRNA(Sec). This chain is Serine--tRNA ligase, found in Dechloromonas aromatica (strain RCB).